A 435-amino-acid chain; its full sequence is MNILQGSEAPLSYEEIASRAGAFDFNKNIPLKNWLRTSTTISKQAHVYVSEHDYSNGVFLLFRYCELFMKCQKHPDAAAYKKELFDYYQGVRNALEEIELIKPIVKEQYEQYQCQKNDLDDLKKLSMKDSQPSLEKPVSYVDEPILEQWALSDLQILPPSSTDLLSPDSQKLSKSSSDLPQFDYPSLNSSPTFNSNLPISSSRFEKTSLSDSKLVSPEPLDDNKDIQFIKKPIYTRTSEPRPKPAGTFKIHAYTEGGKPLRTIYLPKLLKKVFLDVVKPNTKKNLETCGILCGKLRQNAFFITHLVIPLQEATSDTCGTTDEASLFEFQDKHNLLTLGWIHTHPTQTCFMSSVDLHTHCSYQLMLPEAIAIVMAPSKNTSGIFRLLDPEGLQTIVKCRKPGLFHPHEGKVYTMVAQPGHVREINSKLQVVDLRVK.

Residues 162-181 show a composition bias toward low complexity; the sequence is TDLLSPDSQKLSKSSSDLPQ. Residues 162–185 form a disordered region; sequence TDLLSPDSQKLSKSSSDLPQFDYP. Thr-192 bears the Phosphothreonine mark. The region spanning 262–392 is the MPN domain; the sequence is TIYLPKLLKK…FRLLDPEGLQ (131 aa). His-341, His-343, Asp-354, His-356, Cys-397, His-404, and His-406 together coordinate Zn(2+). Residues 341 to 354 carry the JAMM motif motif; sequence HTHPTQTCFMSSVD.

This sequence belongs to the peptidase M67C family. It depends on Zn(2+) as a cofactor.

The protein resides in the cytoplasm. Its subcellular location is the endosome. Functionally, zinc metalloprotease that specifically cleaves 'Lys-63'-linked polyubiquitin chains. Does not cleave 'Lys-48'-linked polyubiquitin chains. Plays a role in the multivesicular body (MVB) sorting pathway. Required for ubiquitin-dependent sorting of proteins into the endosome and subsequent trafficking to the vacuole. May regulate MVB sorting through deubiquitination of ubiquitinated ESCRT proteins. The polypeptide is AMSH-like protease sst2 (sst2) (Schizosaccharomyces pombe (strain 972 / ATCC 24843) (Fission yeast)).